The primary structure comprises 91 residues: YcgL domain-containing protein ETA_15380 (91 aa).

The YcgL domain occupies 1–85 (MFCVIYRSPQ…PLESLLKIHL (85 aa)).

This Erwinia tasmaniensis (strain DSM 17950 / CFBP 7177 / CIP 109463 / NCPPB 4357 / Et1/99) protein is YcgL domain-containing protein ETA_15380.